The following is a 30-amino-acid chain: Cyclotide hyen-E (30 aa).

A cross-link (cyclopeptide (Gly-Asn)) is located at residues Gly1 to Asn30. Disulfide bonds link Cys4–Cys20, Cys8–Cys22, and Cys13–Cys27.

Post-translationally, this is a cyclic peptide. As to expression, detected in stems (at protein level).

Probably participates in a plant defense mechanism. Has cytotoxic activity against HUVEC cells (LC(50)= 2.17 uM) and various cancer cells including HeLa (LC(50)= 3.05 uM), MCF-7 and K562. Displays very weak hemolytic activity. Binds to and induces leakage in phospholipd membranes, particularly ones containing 1-palmitoyl-2-oleophosphatidylethanolamine (POPE). The polypeptide is Cyclotide hyen-E (Pigea enneasperma (Spade flower)).